The following is a 184-amino-acid chain: Cytidylate kinase (184 aa).

8-16 (GQPGSGKTT) is a binding site for ATP.

This sequence belongs to the cytidylate kinase family. Type 2 subfamily.

It localises to the cytoplasm. The catalysed reaction is CMP + ATP = CDP + ADP. The enzyme catalyses dCMP + ATP = dCDP + ADP. This Pyrobaculum calidifontis (strain DSM 21063 / JCM 11548 / VA1) protein is Cytidylate kinase.